Consider the following 216-residue polypeptide: Vacuolar iron transporter homolog 4 (216 aa).

A disordered region spans residues 1–29; the sequence is MAATNGDAELTVAEEAKEEEEATDDGGGG. Residues 1-36 are Cytoplasmic-facing; that stretch reads MAATNGDAELTVAEEAKEEEEATDDGGGGVSSQWLR. A helical transmembrane segment spans residues 37 to 57; that stretch reads AAVLGASDGLVSTAALMLGIG. At 58-65 the chain is on the vacuolar side; that stretch reads AARPADAR. Residues 66-86 form a helical membrane-spanning segment; the sequence is AVLLSGLAGLVAGACSMAIGE. Over 87–134 the chain is Cytoplasmic; that stretch reads YVSVHVQLDVELADLERRRRRGGPAPAGLGLHAAAAAVSRPGQAAAAS. A helical transmembrane segment spans residues 135–155; it reads ALSFAAGAALPLLAAWFVAGA. Residues 156 to 157 are Vacuolar-facing; it reads YR. A helical transmembrane segment spans residues 158–178; that stretch reads VRVVVVVATASLALAAFGAAG. Residues 179–190 are Cytoplasmic-facing; that stretch reads ARLGRAPGGRAG. Residues 191-211 traverse the membrane as a helical segment; the sequence is LRVVVGGLLAMAATYGVMKLF. At 212–216 the chain is on the vacuolar side; the sequence is RTHGV.

It belongs to the CCC1 family.

The protein resides in the vacuole membrane. It catalyses the reaction Fe(2+)(in) = Fe(2+)(out). Functionally, probable vacuolar iron transporter that may be involved in the regulation of iron distribution throughout the plant. The protein is Vacuolar iron transporter homolog 4 of Oryza sativa subsp. japonica (Rice).